A 238-amino-acid chain; its full sequence is tRNA (guanine-N(7)-)-methyltransferase (238 aa).

4 residues coordinate S-adenosyl-L-methionine: Glu-62, Glu-87, Asp-119, and Asp-141. Asp-141 is an active-site residue. Residues Lys-145, Asp-177, and 216–219 contribute to the substrate site; that span reads TRYE.

The protein belongs to the class I-like SAM-binding methyltransferase superfamily. TrmB family.

It catalyses the reaction guanosine(46) in tRNA + S-adenosyl-L-methionine = N(7)-methylguanosine(46) in tRNA + S-adenosyl-L-homocysteine. It functions in the pathway tRNA modification; N(7)-methylguanine-tRNA biosynthesis. In terms of biological role, catalyzes the formation of N(7)-methylguanine at position 46 (m7G46) in tRNA. This Novosphingobium aromaticivorans (strain ATCC 700278 / DSM 12444 / CCUG 56034 / CIP 105152 / NBRC 16084 / F199) protein is tRNA (guanine-N(7)-)-methyltransferase.